A 392-amino-acid polypeptide reads, in one-letter code: MSQIGGATCTWRYLGRFVTLGIYASVALFVWYTLVPTRSKHKDSIAINNNNADPATALIPVHTKNVVIYAATKFFGHPITTERFLATCPDVQNYCRITQEESEFDNADAVLFHNADYRGSTDKFKKMKSQRKPGVPYVLWSLESPTNDMFRPDSHMINWTMTYRTDSDVWAPYGTIVKLKNPVEVDLNAIWEGKTKTATWLASNCITQNHRFDLIKKIIDNGFEIDIWGNCGKQVSQCAGVDNQESPCVLELIKPYKFYISMENSNCKDYVTEKFWKALNDRMTIPIVLARKYYKDLGVPDSAYIAVDDYATLDEFLAHVKKVNKEKDLFLSYHQWRKEWKVIIGSGFSGWCTLCNKLQDKDYILKNPKSYKDVAWWHSFEMCNNQIASKYL.

Topologically, residues 1–12 are cytoplasmic; that stretch reads MSQIGGATCTWR. The helical; Signal-anchor for type II membrane protein transmembrane segment at 13–35 threads the bilayer; the sequence is YLGRFVTLGIYASVALFVWYTLV. The Lumenal segment spans residues 36 to 392; that stretch reads PTRSKHKDSI…CNNQIASKYL (357 aa). A glycan (N-linked (GlcNAc...) asparagine) is linked at Asn158.

Belongs to the glycosyltransferase 10 family. Unlike other alpha-(1,3)-fucosyltransferases, appears not to require a divalent metal cation as cofactor. is required as a cofactor.

Its subcellular location is the golgi apparatus. It localises to the golgi stack membrane. It functions in the pathway protein modification; protein glycosylation. Inhibited by divalent metal cations. Functionally, involved in the fucosylation of N-glycans. Preferentially catalyzes the addition of fucose in alpha 1-3 linkage to the distal GlcNAc residue in N-glycans. Catalyzes the transfer of fucose to Gal-beta-1-4-GlcNAc-alpha-pNP (LN-pNP) and Gal-beta-1-4-GlcNAc-beta-1-3-Gal-beta-1-4-Glc (LNnT). Unlike alpha-(1,3)-fucosyltransferase fut-1, does not transfer fucose to Man-alpha-1-3-(Man-alpha-1-6)-Man-beta-1-4-GlcNAc-beta-1-4-GlcNAc-beta-1-Asn (M3), Man-alpha-1-3-(Man-alpha-1-6)-Man-beta-1-4-GlcNAc-beta-1-4-(Fuc-alpha-1-6)-GlcNAc-beta-1-Asn (M3F6) and GlcNAc-beta-1-2-Man-alpha-1-3-(GlcNAc-beta-1-2-Man-alpha-1-6)-Man-beta-1-4-GlcNAc-beta-1-4(Fuc-alpha-1-6)-GlcNAc-beta-1-Asn (GnM3F6). This is Alpha-(1,3)-fucosyltransferase fut-6 from Caenorhabditis elegans.